Consider the following 485-residue polypeptide: Arginine biosynthesis bifunctional protein ArgJ, mitochondrial (485 aa).

Residues Thr185, Lys214, Thr225, and Glu315 each coordinate substrate. Thr225 serves as the catalytic Nucleophile.

This sequence belongs to the ArgJ family. As to quaternary structure, heterodimer of an alpha and a beta chain. In terms of processing, the alpha and beta chains are autoproteolytically processed from a single precursor protein within the mitochondrion.

Its subcellular location is the mitochondrion matrix. The catalysed reaction is N(2)-acetyl-L-ornithine + L-glutamate = N-acetyl-L-glutamate + L-ornithine. The enzyme catalyses L-glutamate + acetyl-CoA = N-acetyl-L-glutamate + CoA + H(+). It participates in amino-acid biosynthesis; L-arginine biosynthesis; L-ornithine and N-acetyl-L-glutamate from L-glutamate and N(2)-acetyl-L-ornithine (cyclic): step 1/1. The protein operates within amino-acid biosynthesis; L-arginine biosynthesis; N(2)-acetyl-L-ornithine from L-glutamate: step 1/4. Catalyzes two activities which are involved in the cyclic version of arginine biosynthesis: the synthesis of acetylglutamate from glutamate and acetyl-CoA, and of ornithine by transacetylation between acetylornithine and glutamate. The polypeptide is Arginine biosynthesis bifunctional protein ArgJ, mitochondrial (Penicillium rubens (strain ATCC 28089 / DSM 1075 / NRRL 1951 / Wisconsin 54-1255) (Penicillium chrysogenum)).